The primary structure comprises 109 residues: Flagellar hook-basal body complex protein FliE (109 aa).

Belongs to the FliE family.

The protein localises to the bacterial flagellum basal body. The protein is Flagellar hook-basal body complex protein FliE of Pseudomonas syringae pv. tomato (strain ATCC BAA-871 / DC3000).